Here is a 531-residue protein sequence, read N- to C-terminus: Polygalacturonase (531 aa).

A signal peptide spans 1–23 (MILSHRYTLIALAAAILSSGAHA). The active-site Proton donor is the Asp-307. The active site involves His-333. The interval 518 to 531 (AFVPLKSVAPTSPI) is required for PGA export across the outer membrane and catalytic activity.

Belongs to the glycosyl hydrolase 28 family. In terms of assembly, monomer.

The protein resides in the secreted. It carries out the reaction (1,4-alpha-D-galacturonosyl)n+m + H2O = (1,4-alpha-D-galacturonosyl)n + (1,4-alpha-D-galacturonosyl)m.. Contributes to the wilt disease production on tomato. This chain is Polygalacturonase (pglA), found in Ralstonia nicotianae (strain ATCC BAA-1114 / GMI1000) (Ralstonia solanacearum).